Consider the following 305-residue polypeptide: MPDVVDVLDLDKKDMIKIFELAEDIEYKKLHKSKWCALENKTVSLLFVEPSTRTRLSFEESAKRLCAHTLTIVGEEASSFVKGESLYDTIKVLDKISDIIVIRHNLDGSAKYASEVAANPVINAGDGKNQHPTQSLIDLYVVRKRKGGLEDLRYAVVGDLRYARTARSFLLALTKFKPRSVYLVAPEVLKPSIKFLEELKSMGLNVFEVDRLEDVIPNVDVIYVTRIQKERFPDPSEYEKVKGSYKITLDLIKRGKGDLIVLHPLPRVDELDVRIDSTPHAAYFDQVAASVPVRMATLAWSAGVV.

Residues R53 and T54 each contribute to the carbamoyl phosphate site. K82 contacts L-aspartate. The carbamoyl phosphate site is built by R103, H131, and Q134. Residues R164 and R226 each contribute to the L-aspartate site. L265 and P266 together coordinate carbamoyl phosphate.

The protein belongs to the aspartate/ornithine carbamoyltransferase superfamily. ATCase family. As to quaternary structure, heterooligomer of catalytic and regulatory chains.

It catalyses the reaction carbamoyl phosphate + L-aspartate = N-carbamoyl-L-aspartate + phosphate + H(+). The protein operates within pyrimidine metabolism; UMP biosynthesis via de novo pathway; (S)-dihydroorotate from bicarbonate: step 2/3. Its function is as follows. Catalyzes the condensation of carbamoyl phosphate and aspartate to form carbamoyl aspartate and inorganic phosphate, the committed step in the de novo pyrimidine nucleotide biosynthesis pathway. The chain is Aspartate carbamoyltransferase catalytic subunit from Ignicoccus hospitalis (strain KIN4/I / DSM 18386 / JCM 14125).